We begin with the raw amino-acid sequence, 715 residues long: MIYEGKAITVKALESGIVELKFDLKGESVNKFNRLTLNELRQAVDAIKADASVKGVIVSSGKDVFIVGADITEFVDNFKLPEAELVAGNLEANRIFSDFEDLEVPTVAAINGIALGGGLEMCLAADYRIMSSSAKIGLPEVKLGIYPGFGGTVRLPRLIGSDNAIEWIAAGKENRAEDALKVGAVDAVVAPELLQAGALDLIKRAISGELDHKAKRQPKLEKLKLNAIEQMMAFETAKGFVAGQAGPNYPAPVEAIKTIQKAANFGRDKALEVEAAGFAKLARTSVAESLIGLFLNDQELKRKAKAHDEIAHDVKQAAVLGAGIMGGGIAYQSAVKGTPILMKDIREEAIQLGLNEASKLLGKRVEKGRLTPAKMAEALNAIRPTLSYGDFGNVDIVVEAVVENPKVKQAVLAEVEGQVKEDAILASNTSTISINLLAKALKRPENFVGMHFFNPVHMMPLVEVIRGEKSSEVAVATTVAYAKKMGKNPIVVNDCPGFLVNRVLFPYFGGFAKLVSAGVDFVRIDKVMEKFGWPMGPAYLMDVVGIDTGHHGRDVMAEGFPDRMKDDRRSAVDALYEANRLGQKNGKGFYAYETDKRGKPKKVADASVLDVLKPVIFEQREVSDEDIINWMMVPLCLETVRCLEDGIVETAAEADMGLVYGIGFPPFRGGALRYIDSIGVAEFVALADKYADLGPLYHATAKLREMAKNGQRFFN.

The interval 1–190 (MIYEGKAITV…KVGAVDAVVA (190 aa)) is enoyl-CoA hydratase/isomerase. Aspartate 297 is a substrate binding site. Positions 312 to 715 (HDVKQAAVLG…MAKNGQRFFN (404 aa)) are 3-hydroxyacyl-CoA dehydrogenase. NAD(+) is bound by residues methionine 325, aspartate 344, 401–403 (VVE), lysine 408, and serine 430. The active-site For 3-hydroxyacyl-CoA dehydrogenase activity is the histidine 451. An NAD(+)-binding site is contributed by asparagine 454. Substrate contacts are provided by asparagine 501 and tyrosine 660.

In the N-terminal section; belongs to the enoyl-CoA hydratase/isomerase family. This sequence in the C-terminal section; belongs to the 3-hydroxyacyl-CoA dehydrogenase family. Heterotetramer of two alpha chains (FadB) and two beta chains (FadA).

It carries out the reaction a (3S)-3-hydroxyacyl-CoA + NAD(+) = a 3-oxoacyl-CoA + NADH + H(+). The catalysed reaction is a (3S)-3-hydroxyacyl-CoA = a (2E)-enoyl-CoA + H2O. It catalyses the reaction a 4-saturated-(3S)-3-hydroxyacyl-CoA = a (3E)-enoyl-CoA + H2O. The enzyme catalyses (3S)-3-hydroxybutanoyl-CoA = (3R)-3-hydroxybutanoyl-CoA. It carries out the reaction a (3Z)-enoyl-CoA = a 4-saturated (2E)-enoyl-CoA. The catalysed reaction is a (3E)-enoyl-CoA = a 4-saturated (2E)-enoyl-CoA. Its pathway is lipid metabolism; fatty acid beta-oxidation. Involved in the aerobic and anaerobic degradation of long-chain fatty acids via beta-oxidation cycle. Catalyzes the formation of 3-oxoacyl-CoA from enoyl-CoA via L-3-hydroxyacyl-CoA. It can also use D-3-hydroxyacyl-CoA and cis-3-enoyl-CoA as substrate. This Pseudomonas entomophila (strain L48) protein is Fatty acid oxidation complex subunit alpha.